A 505-amino-acid chain; its full sequence is MSEQHAQGADAVVDLNNELKTRREKLANLREQGIAFPNDFRRDHTSDQLHAEFDGKENEELEALNIEVAVAGRMMTRRIMGKASFVTLQDVGGRIQLYVARDDLPEGVYNEQFKKWDLGDILGAKGKLFKTKTGELSIHCTELRLLTKALRPLPDKFHGLQDQEARYRQRYLDLISNDESRNTFKVRSQILSGIRQFMVNRGFMEVETPMMQVIPGGAAARPFITHHNALDLDMYLRIAPELYLKRLVVGGFERVFEINRNFRNEGISVRHNPEFTMMELYMAYADYKDLIELTESLFRTLAQDILGKTEVTYGDVTLDFGKPFEKLTMREAIKKYRPETDMADLDNFDSAKAIAESIGIHVEKSWGLGRIVTEIFEEVAEAHLIQPTFITEYPAEVSPLARRNDINPEITDRFEFFIGGREIGNGFSELNDAEDQAQRFLDQVAAKDAGDDEAMFYDEDYVTALEHGLPPTAGLGIGIDRMVMLFTNSHTIRDVILFPAMRPVK.

Glu415 and Glu422 together coordinate Mg(2+).

The protein belongs to the class-II aminoacyl-tRNA synthetase family. As to quaternary structure, homodimer. It depends on Mg(2+) as a cofactor.

The protein resides in the cytoplasm. The enzyme catalyses tRNA(Lys) + L-lysine + ATP = L-lysyl-tRNA(Lys) + AMP + diphosphate. In Shigella flexneri, this protein is Lysine--tRNA ligase.